We begin with the raw amino-acid sequence, 121 residues long: Heimdall profilin (121 aa).

This sequence belongs to the Asgard profilin family.

The protein localises to the cytoplasm. The protein resides in the cytoskeleton. Its function is as follows. Binds to actin and affects the structure of the cytoskeleton. At high concentrations inhibits spontaneous rabbit actin nucleation. This strongly suggests this archaea has a profilin-regulated actin system, and actin-type genes can be identified in this organism. In Heimdallarchaeota archaeon (strain LC_2), this protein is Heimdall profilin.